The chain runs to 891 residues: Dynein axonemal intermediate chain 3 (891 aa).

A compositionally biased stretch (basic residues) spans 1 to 17; it reads MAPKQKKKTSRGKKRLK. The disordered stretch occupies residues 1 to 22; the sequence is MAPKQKKKTSRGKKRLKPVLAA. WD repeat units lie at residues 395–435, 477–533, 670–709, and 713–753; these read ESPD…DRIE, GHKK…PLTP, IHDGTVHTIQRSPFYNDIILTVGGWNVAIWKEGVMTGPLL, and CAPK…HEPA. Positions 818 to 861 form a coiled coil; the sequence is LEYVEQRKKIREQEKKEMELEMAKKKVKTYQKSKEQMQAELKMD.

Interacts with ACTR2; this interaction reduces binding of the Arp2/3 complex to the VCA domain of nucleation promoting factors. Part of the multisubunit axonemal dynein complex formed at least of two heavy chains and a number of intermediate and light chains. Found in a associated with the catalytic heavy chain DNAH2, the intermediate chain DNAI4, and the light chain DYNLT1.

It is found in the cytoplasm. Acts as a negative regulator of cell migration, invasion, and metastasis downstream of p53/TP53, through inhibition of Arp2/3 complex-mediated actin polymerization. Via its association with the multisubunit axonemal dynein complex, is potentially involved in the regulation of cilia function. May play a role in osteogenesis of dental tissue-derived mesenchymal stem cells. The polypeptide is Dynein axonemal intermediate chain 3 (Homo sapiens (Human)).